Consider the following 160-residue polypeptide: Transcription antitermination protein NusB (160 aa).

It belongs to the NusB family.

Involved in transcription antitermination. Required for transcription of ribosomal RNA (rRNA) genes. Binds specifically to the boxA antiterminator sequence of the ribosomal RNA (rrn) operons. In Sinorhizobium fredii (strain NBRC 101917 / NGR234), this protein is Transcription antitermination protein NusB.